A 519-amino-acid polypeptide reads, in one-letter code: ATP synthase subunit alpha (519 aa).

ATP is bound at residue 174–181 (GDRQTGKT).

This sequence belongs to the ATPase alpha/beta chains family. F-type ATPases have 2 components, CF(1) - the catalytic core - and CF(0) - the membrane proton channel. CF(1) has five subunits: alpha(3), beta(3), gamma(1), delta(1), epsilon(1). CF(0) has three main subunits: a(1), b(2) and c(9-12). The alpha and beta chains form an alternating ring which encloses part of the gamma chain. CF(1) is attached to CF(0) by a central stalk formed by the gamma and epsilon chains, while a peripheral stalk is formed by the delta and b chains.

It is found in the cell inner membrane. It carries out the reaction ATP + H2O + 4 H(+)(in) = ADP + phosphate + 5 H(+)(out). Functionally, produces ATP from ADP in the presence of a proton gradient across the membrane. The alpha chain is a regulatory subunit. The sequence is that of ATP synthase subunit alpha from Acidovorax ebreus (strain TPSY) (Diaphorobacter sp. (strain TPSY)).